The following is a 528-amino-acid chain: MAGSDTAPFLSQADDPDDGPAPGHPGLPGPMGNPKSGELEVPDCEGLQRITGLSRGHSTLIVVVLCYINLLNYMDRFTVAGVLTDIEQFFNIGDGSTGLIQTVFISSYMVLAPVFGYLGDRYNRKYLMCGGIAFWSLVTLGSSFIPREHFWLLLLTRGLVGVGEASYSTIAPTLIADLFVADQRSRMLSIFYFAIPVGSGLGYIAGSKVKDLAGDWHWALRVTPGLGVLAVLLLFLVVQEPPRGAVERHSGSPPLSPTSWWADLKALARNPSFVLSSLGFTAVAFVTGSLALWAPAFLLRSRVVLGETPPCLPGDSCSSSDSLIFGLITCLTGVLGVGLGVEISRRLRRFNPRADPLVCAAGLLGSSPFLFLSLACARGSIVATYIFIFIGETLLSMNWAIVADILLYVVIPTRRSTAEAFQIVLSHLLGDAGSPYLIGLISDRLRRSWPPSFLSEFRALQFSLMLCAFVGALGGAAFLGTAMFIENDRRRAQLHVQGLLHETEPSDDQIVVPQRGRSTRVPVSSVLI.

The disordered stretch occupies residues 1–38 (MAGSDTAPFLSQADDPDDGPAPGHPGLPGPMGNPKSGE). Alanine 2 carries the N-acetylalanine modification. Helical transmembrane passes span 60-80 (LIVV…FTVA), 98-118 (GLIQ…FGYL), 126-146 (YLMC…SFIP), 160-180 (VGVG…DLFV), 187-207 (MLSI…IAGS), 218-238 (WALR…FLVV), 278-298 (LGFT…PAFL), 323-343 (LIFG…GVEI), 357-377 (LVCA…LACA), 381-401 (IVAT…NWAI), 421-441 (FQIV…IGLI), and 465-485 (MLCA…AMFI). Serine 518 bears the Phosphoserine mark.

Belongs to the major facilitator superfamily. Spinster (TC 2.A.1.49) family. As to quaternary structure, interacts with BCL2 and BCL2L1.

The protein resides in the lysosome membrane. It catalyses the reaction a 1-acyl-sn-glycero-3-phosphocholine(out) + H(+)(out) = a 1-acyl-sn-glycero-3-phosphocholine(in) + H(+)(in). It carries out the reaction 1-hexadecanoyl-sn-glycero-3-phosphocholine(out) + H(+)(out) = 1-hexadecanoyl-sn-glycero-3-phosphocholine(in) + H(+)(in). The enzyme catalyses 1-(9Z-octadecenoyl)-sn-glycero-3-phosphocholine(out) + H(+)(out) = 1-(9Z-octadecenoyl)-sn-glycero-3-phosphocholine(in) + H(+)(in). The catalysed reaction is 1-(5Z,8Z,11Z,14Z-eicosatetraenoyl)-sn-glycero-3-phosphocholine(out) + H(+)(out) = 1-(5Z,8Z,11Z,14Z-eicosatetraenoyl)-sn-glycero-3-phosphocholine(in) + H(+)(in). It catalyses the reaction 1-(4Z,7Z,10Z,13Z,16Z,19Z-docosahexaenoyl)-sn-glycero-3-phosphocholine(out) + H(+)(out) = 1-(4Z,7Z,10Z,13Z,16Z,19Z-docosahexaenoyl)-sn-glycero-3-phosphocholine(in) + H(+)(in). It carries out the reaction a 1-acyl-sn-glycero-3-phosphoethanolamine(out) + H(+)(out) = a 1-acyl-sn-glycero-3-phosphoethanolamine(in) + H(+)(in). The enzyme catalyses 1-(9Z-octadecenoyl)-sn-glycero-3-phosphoethanolamine(out) + H(+)(out) = 1-(9Z-octadecenoyl)-sn-glycero-3-phosphoethanolamine(in) + H(+)(in). The catalysed reaction is 1-acyl-sn-glycero-3-phospho-(1'-sn-glycerol)(out) + H(+)(out) = 1-acyl-sn-glycero-3-phospho-(1'-sn-glycerol)(in) + H(+)(in). It catalyses the reaction 1-(9Z-octadecenoyl)-sn-glycero-3-phospho-(1'-sn-glycerol)(out) + H(+)(out) = 1-(9Z-octadecenoyl)-sn-glycero-3-phospho-(1'-sn-glycerol)(in) + H(+)(in). It carries out the reaction a 1-O-(1Z-alkenyl)-sn-glycero-3-phosphocholine(out) + H(+)(out) = a 1-O-(1Z-alkenyl)-sn-glycero-3-phosphocholine(in) + H(+)(in). The enzyme catalyses 1-(1Z-hexadecenyl)-sn-glycero-3-phosphocholine(out) + H(+)(out) = 1-(1Z-hexadecenyl)-sn-glycero-3-phosphocholine(in) + H(+)(in). The catalysed reaction is a 1-O-(1Z-alkenyl)-sn-glycero-3-phosphoethanolamine(out) + H(+)(out) = a 1-O-(1Z-alkenyl)-sn-glycero-3-phosphoethanolamine(in) + H(+)(in). It catalyses the reaction 1-O-(1Z-hexadecenyl)-sn-glycero-3-phosphoethanolamine(out) + H(+)(out) = 1-O-(1Z-hexadecenyl)-sn-glycero-3-phosphoethanolamine(in) + H(+)(in). Its function is as follows. Plays a critical role in the phospholipid salvage pathway from lysosomes to the cytosol. Mediates the rate-limiting, proton-dependent, lysosomal efflux of lysophospholipids, which can then be reacylated by acyltransferases in the endoplasmic reticulum to form phospholipids. Selective for zwitterionic headgroups such as lysophosphatidylcholine (LPC) and lysophosphatidylethanolamine (LPE), can also transport lysophosphatidylglycerol (LPG), but not other anionic lysophospholipids, sphingosine, nor sphingomyelin. Transports lysophospholipids with saturated, monounsaturated, and polyunsaturated fatty acids, such as 1-hexadecanoyl-sn-glycero-3-phosphocholine, 1-(9Z-octadecenoyl)-sn-glycero-3-phosphocholine and 1-(4Z,7Z,10Z,13Z,16Z,19Z-docosahexaenoyl)-sn-glycero-3-phosphocholine, respectively. Can also transport lysoplasmalogen (LPC with a fatty alcohol) such as 1-(1Z-hexadecenyl)-sn-glycero-3-phosphocholine. Essential player in lysosomal homeostasis. Crucial for cell survival under conditions of nutrient limitation. May be involved in necrotic or autophagic cell death. This Rattus norvegicus (Rat) protein is Protein spinster homolog 1 (Spns1).